The following is a 286-amino-acid chain: Phycobilisome 32.1 kDa linker polypeptide, phycocyanin-associated, rod (286 aa).

A PBS-linker domain is found at 2 to 180 (AITTAASRLG…LYRGYANSDR (179 aa)). Positions 234–286 (DRVYRLEVTGIRSPGYPSVRRSSTVFIVPYERLSDKIQQVHKQGGKIVSVTSA) constitute a CpcD-like domain.

It belongs to the phycobilisome linker protein family. In terms of assembly, associated with the phycobilisome, a hemidiscoidal structure that is composed of two distinct substructures: a core complex and a number of rods radiating from the core.

The protein resides in the cellular thylakoid membrane. Functionally, rod linker protein, associated with phycocyanin. Linker polypeptides determine the state of aggregation and the location of the disk-shaped phycobiliprotein units within the phycobilisome and modulate their spectroscopic properties in order to mediate a directed and optimal energy transfer. In Nostoc sp. (strain PCC 7120 / SAG 25.82 / UTEX 2576), this protein is Phycobilisome 32.1 kDa linker polypeptide, phycocyanin-associated, rod (cpcC).